A 161-amino-acid chain; its full sequence is ATP synthase subunit b 1 (161 aa).

A helical transmembrane segment spans residues 3–23 (LDATFYALVGLILFFVLIAYL).

It belongs to the ATPase B chain family. In terms of assembly, F-type ATPases have 2 components, F(1) - the catalytic core - and F(0) - the membrane proton channel. F(1) has five subunits: alpha(3), beta(3), gamma(1), delta(1), epsilon(1). F(0) has three main subunits: a(1), b(2) and c(10-14). The alpha and beta chains form an alternating ring which encloses part of the gamma chain. F(1) is attached to F(0) by a central stalk formed by the gamma and epsilon chains, while a peripheral stalk is formed by the delta and b chains.

Its subcellular location is the cell inner membrane. F(1)F(0) ATP synthase produces ATP from ADP in the presence of a proton or sodium gradient. F-type ATPases consist of two structural domains, F(1) containing the extramembraneous catalytic core and F(0) containing the membrane proton channel, linked together by a central stalk and a peripheral stalk. During catalysis, ATP synthesis in the catalytic domain of F(1) is coupled via a rotary mechanism of the central stalk subunits to proton translocation. Its function is as follows. Component of the F(0) channel, it forms part of the peripheral stalk, linking F(1) to F(0). This Sinorhizobium medicae (strain WSM419) (Ensifer medicae) protein is ATP synthase subunit b 1.